Here is a 493-residue protein sequence, read N- to C-terminus: MSIYQSIQDFISLALQNGTIEPLDELYHRNQLLHFLGLNDWAEVDKEVHETNSLILMDQLLAIANENNVIAKGQDEFYEAALMNFMTPRPSKINHDFWEKYQASPDAATQYFYELAQQVNQVKTRDIARNIAFSHLTKYGKLEITINLSKPEKDPKAIAAAKLVKASSYPACQLCLENEGFYGLGNKPARSNHRIIQVSINGEDWGFQYSPYAYFNEHSILLNAKHQPMEINKRAFDNLLGFLDKFPNYMIGSNADLPIVGGSILTHDHYQAGRHDFPMAKAELRETIELAHFPEVSCGIVNWPMSVLRLASENQVELSKAADDFLKKWQVYSDESLQIKAKSTDGTPHHTITPIARIRDGKYELDLVLRDNNTNEKYPDGIFHPHPALHHIKKENIGLIEVMGLAILPARLETELLEVERYLLNQDNQMNEIHKAWAEQLKNEEHFTRETVHATVQGAVGEVFEEVLKDAGVFKDTQEGHEGFRKFIDFVNQ.

Belongs to the galactose-1-phosphate uridylyltransferase type 2 family.

It is found in the cytoplasm. The catalysed reaction is alpha-D-galactose 1-phosphate + UDP-alpha-D-glucose = alpha-D-glucose 1-phosphate + UDP-alpha-D-galactose. The protein operates within carbohydrate metabolism; galactose metabolism. The protein is Galactose-1-phosphate uridylyltransferase of Lactococcus lactis subsp. cremoris (strain SK11).